The following is a 490-amino-acid chain: Cytochrome P450 2C12, female-specific (490 aa).

Cys435 provides a ligand contact to heme.

Belongs to the cytochrome P450 family. It depends on heme as a cofactor.

Its subcellular location is the endoplasmic reticulum membrane. It is found in the microsome membrane. The enzyme catalyses an organic molecule + reduced [NADPH--hemoprotein reductase] + O2 = an alcohol + oxidized [NADPH--hemoprotein reductase] + H2O + H(+). Its function is as follows. This P450 is active in 15-beta-hydroxylation of steroid sulfates. The chain is Cytochrome P450 2C12, female-specific (Cyp2c12) from Rattus norvegicus (Rat).